A 256-amino-acid chain; its full sequence is Protein FixA (256 aa).

Belongs to the ETF beta-subunit/FixA family. In terms of assembly, heterodimer of FixA and FixB.

It functions in the pathway amine and polyamine metabolism; carnitine metabolism. Its function is as follows. Required for anaerobic carnitine reduction. May bring reductant to CaiA. This chain is Protein FixA, found in Salmonella paratyphi B (strain ATCC BAA-1250 / SPB7).